The primary structure comprises 220 residues: Sericin-2 (220 aa).

2 stretches are compositionally biased toward low complexity: residues 1 to 131 (SSST…ASSS) and 141 to 155 (NESS…QNSA). The tract at residues 1–220 (SSSTNNSSGS…SSSSSSWSSA (220 aa)) is disordered. The span at 156–165 (TRSQVINADG) shows a compositional bias: polar residues. The span at 166 to 220 (SQSSSSSSSSASNQASATSSSSVSADGSESESSSSSSSSSSSSSESSSSSSWSSA) shows a compositional bias: low complexity.

In terms of tissue distribution, produced exclusively in the middle (MSG) section of silk glands.

The protein resides in the secreted. Functionally, provides the silk fibroin thread with a sticky coating. Acts as a cement by sticking silk threads together. The protein is Sericin-2 (SER2) of Galleria mellonella (Greater wax moth).